The primary structure comprises 160 residues: Ureidoglycolate lyase (160 aa).

The protein belongs to the ureidoglycolate lyase family. In terms of assembly, homodimer. Requires Ni(2+) as cofactor.

It carries out the reaction (S)-ureidoglycolate = urea + glyoxylate. The protein operates within nitrogen metabolism; (S)-allantoin degradation. In terms of biological role, catalyzes the catabolism of the allantoin degradation intermediate (S)-ureidoglycolate, generating urea and glyoxylate. Involved in the anaerobic utilization of allantoin as sole nitrogen source. Reinforces the induction of genes involved in the degradation of allantoin and glyoxylate by producing glyoxylate. The polypeptide is Ureidoglycolate lyase (Shigella flexneri serotype 5b (strain 8401)).